Here is a 276-residue protein sequence, read N- to C-terminus: Undecaprenyl-diphosphatase (276 aa).

Transmembrane regions (helical) follow at residues 43–63, 85–105, 109–129, 183–203, 214–234, and 249–269; these read RAMA…VWEF, GNLL…ADLI, LFNP…MLWA, AATE…AVYS, ADLP…MIAV, and FAWY…FGWV.

This sequence belongs to the UppP family.

The protein localises to the cell inner membrane. It carries out the reaction di-trans,octa-cis-undecaprenyl diphosphate + H2O = di-trans,octa-cis-undecaprenyl phosphate + phosphate + H(+). Its function is as follows. Catalyzes the dephosphorylation of undecaprenyl diphosphate (UPP). Confers resistance to bacitracin. In Pseudomonas putida (strain GB-1), this protein is Undecaprenyl-diphosphatase.